A 386-amino-acid chain; its full sequence is 5-hydroxytryptamine receptor 1B (386 aa).

At 1-42 (MEEQGIQCAPPPPAASQTGVPLTNLSHNCSADGYIYQDSIAL) the chain is on the extracellular side. N-linked (GlcNAc...) asparagine glycans are attached at residues Asn24 and Asn28. Residues 43–68 (PWKVLLVALLALITLATTLSNAFVIA) traverse the membrane as a helical segment. The Cytoplasmic portion of the chain corresponds to 69-82 (TVYRTRKLHTPANY). Residues 83–107 (LIASLAVTDLLVSILVMPISTMYTV) traverse the membrane as a helical segment. Residues 108-115 (TGRWTLGQ) are Extracellular-facing. Residues 116-141 (VVCDFWLSSDITCCTASIMHLCVIAL) form a helical membrane-spanning segment. Cysteines 118 and 195 form a disulfide. Asp125 and Thr130 together coordinate ergotamine. The DRY motif; important for ligand-induced conformation changes and signaling motif lies at 142–144 (DRY). Topologically, residues 142–161 (DRYWAITDAVEYSAKRTPKR) are cytoplasmic. A helical membrane pass occupies residues 162 to 180 (AAIMIVLVWVFSISISLPP). Residues 181–201 (FFWRQAKAEEEMLDCFVNTDH) are Extracellular-facing. Val197 contributes to the ergotamine binding site. Residues 202-225 (VLYTVYSTVGAFYLPTLLLIALYG) traverse the membrane as a helical segment. The Cytoplasmic portion of the chain corresponds to 226-311 (RIYVEARSRI…AARERKATKT (86 aa)). The segment covering 255–268 (DSPGSTSSVTSINS) has biased composition (polar residues). A disordered region spans residues 255–278 (DSPGSTSSVTSINSRAPDVPSESG). Residues 312–333 (LGIILGAFIVCWLPFFIISLVM) form a helical membrane-spanning segment. Residues 334–343 (PICKDACWFH) are Extracellular-facing. Residues 344 to 366 (MAIFDFFNWLGYLNSLINPIIYT) form a helical membrane-spanning segment. An NPxxY motif; important for ligand-induced conformation changes and signaling motif is present at residues 361–365 (NPIIY). Topologically, residues 367–386 (MSNEDFKQAFHKLIRFKCAG) are cytoplasmic. Residue Cys384 is the site of S-palmitoyl cysteine attachment.

The protein belongs to the G-protein coupled receptor 1 family. In terms of assembly, homodimer. Heterodimer with HTR1D. Phosphorylated. Desensitization of the receptor may be mediated by its phosphorylation. In terms of processing, palmitoylated. As to expression, predominantly expressed in striatum and Purkinje cells.

It is found in the cell membrane. Its function is as follows. G-protein coupled receptor for 5-hydroxytryptamine (serotonin). Also functions as a receptor for ergot alkaloid derivatives, various anxiolytic and antidepressant drugs and other psychoactive substances, such as lysergic acid diethylamide (LSD). Ligand binding causes a conformation change that triggers signaling via guanine nucleotide-binding proteins (G proteins) and modulates the activity of downstream effectors, such as adenylate cyclase. HTR1B is coupled to G(i)/G(o) G alpha proteins and mediates inhibitory neurotransmission by inhibiting adenylate cyclase activity. Arrestin family members inhibit signaling via G proteins and mediate activation of alternative signaling pathways. Regulates the release of 5-hydroxytryptamine, dopamine and acetylcholine in the brain, and thereby affects neural activity, nociceptive processing, pain perception, mood and behavior. Besides, plays a role in vasoconstriction of cerebral arteries. This chain is 5-hydroxytryptamine receptor 1B (Htr1b), found in Mus musculus (Mouse).